Reading from the N-terminus, the 319-residue chain is Thioredoxin reductase 1 (319 aa).

FAD is bound by residues 11-14 (SGPA), 40-41 (IA), Q45, N54, V87, C145, D288, and 295-297 (RQA). C142 and C145 are joined by a disulfide. Position 303 is a phosphoserine (S303).

This sequence belongs to the class-II pyridine nucleotide-disulfide oxidoreductase family. As to quaternary structure, homodimer. It depends on FAD as a cofactor.

The protein resides in the cytoplasm. It is found in the mitochondrion intermembrane space. The enzyme catalyses [thioredoxin]-dithiol + NADP(+) = [thioredoxin]-disulfide + NADPH + H(+). Its function is as follows. Central component in the thioredoxin system. Reduces thioredoxins 1 and 2. This chain is Thioredoxin reductase 1 (TRR1), found in Saccharomyces cerevisiae (strain ATCC 204508 / S288c) (Baker's yeast).